The following is a 71-amino-acid chain: uncharacterized protein (71 aa).

Residues 44 to 66 traverse the membrane as a helical segment; the sequence is LFFLVFRRLFSWFLVLLPSPRFF.

It localises to the membrane. This is an uncharacterized protein from Saccharomyces cerevisiae (strain ATCC 204508 / S288c) (Baker's yeast).